A 350-amino-acid chain; its full sequence is Hydroxymethylglutaryl-CoA synthase (350 aa).

Asp-30 lines the (3S)-3-hydroxy-3-methylglutaryl-CoA pocket. Glu-82 functions as the Proton donor/acceptor in the catalytic mechanism. Residues Cys-114, Ser-155, Thr-203, and His-236 each contribute to the (3S)-3-hydroxy-3-methylglutaryl-CoA site. Cys-114 acts as the Acyl-thioester intermediate in catalysis. The active-site Proton donor/acceptor is His-236. Arg-241 is a binding site for CoA. Positions 245, 268, and 298 each coordinate (3S)-3-hydroxy-3-methylglutaryl-CoA.

It belongs to the thiolase-like superfamily. Archaeal HMG-CoA synthase family. As to quaternary structure, interacts with acetoacetyl-CoA thiolase that catalyzes the precedent step in the pathway and with a DUF35 protein. The acetoacetyl-CoA thiolase/HMG-CoA synthase complex channels the intermediate via a fused CoA-binding site, which allows for efficient coupling of the endergonic thiolase reaction with the exergonic HMGCS reaction.

The enzyme catalyses acetoacetyl-CoA + acetyl-CoA + H2O = (3S)-3-hydroxy-3-methylglutaryl-CoA + CoA + H(+). It functions in the pathway metabolic intermediate biosynthesis; (R)-mevalonate biosynthesis; (R)-mevalonate from acetyl-CoA: step 2/3. Catalyzes the condensation of acetyl-CoA with acetoacetyl-CoA to form 3-hydroxy-3-methylglutaryl-CoA (HMG-CoA). Functions in the mevalonate (MVA) pathway leading to isopentenyl diphosphate (IPP), a key precursor for the biosynthesis of isoprenoid compounds that are building blocks of archaeal membrane lipids. The chain is Hydroxymethylglutaryl-CoA synthase from Pyrobaculum calidifontis (strain DSM 21063 / JCM 11548 / VA1).